We begin with the raw amino-acid sequence, 6874 residues long: Nesprin-2 (6874 aa).

An actin-binding region spans residues 1–286; sequence MAASPVLPTE…MTYVAQFLKY (286 aa). The Cytoplasmic segment spans residues 1 to 6823; it reads MAASPVLPTE…RRSFLSRVIR (6823 aa). 2 Calponin-homology (CH) domains span residues 31 to 136 and 183 to 288; these read DTQK…LHFH and WSAK…KYSK. Spectrin repeat units follow at residues 299-380, 381-474, 475-577, and 578-680; these read AKVR…HQVA, AWRA…RINN, VLGK…QYIH, and NTKA…IQDQ. The stretch at 299–6767 forms a coiled coil; the sequence is AKVRDALVWL…PDASLTSFDE (6469 aa). The segment at 675-723 is disordered; that stretch reads VKIQDQPPGNSSGTSLSKESAMAAEPGGSRGEDVKAAEKQEVEDEESAG. Positions 681 to 692 are enriched in polar residues; the sequence is PPGNSSGTSLSK. Basic and acidic residues predominate over residues 704-714; it reads RGEDVKAAEKQ. Spectrin repeat units lie at residues 727-834, 835-928, 929-1030, 1120-1211, 1262-1322, 1323-1409, 1410-1514, 1515-1626, 1627-1728, 1729-1820, 1821-1928, 1929-2026, 2027-2122, 2123-2233, 2234-2350, 2422-2503, 2504-2610, 2611-2707, 2708-2821, 2822-2923, 2924-3027, 3028-3133, 3134-3239, 3240-3343, 3344-3456, 3457-3563, 3564-3669, 3670-3767, 3768-3870, 3871-3976, and 3977-4074; these read VNEE…KNLS, DEPL…LRHE, ISLY…KCAS, TQRG…LLNT, DIRD…DALD, ALEG…QSKE, EGPP…ASVT, ESLE…KTEE, YGEN…AGGS, NSYA…TKKN, ALQD…AGEL, NNSF…EEED, KLPA…LANT, YLSH…SVQK, LEGH…LNSI, DERE…TLKK, TKER…KCFQ, QATE…EALE, PLNR…QLEL, KLEE…FLQN, NGSE…GKIK, QLDT…NMLL, ELQP…SLRA, DVLN…AQEA, EEER…QWGG, ELKR…TTRK, NKDL…SSEV, SKSS…ESRT, SQLN…QIME, ALPH…VTQE, and QNEL…KPSA. The interval 2338-2397 is disordered; that stretch reads SAKQETENGLNSILKSKSSTEKHVKFSLPVEEMPATSEVPKPTRESAAVGESGGARETNT. Over residues 2344–2354 the composition is skewed to polar residues; the sequence is ENGLNSILKSK. Disordered regions lie at residues 4062–4152, 4171–4193, 4326–4348, and 4401–4429; these read KQEQ…ATIV, APDS…TDEG, FSED…DQPA, and HQEN…DSTL. The segment covering 4081–4091 has biased composition (basic and acidic residues); the sequence is VAERDASERKL. Ser4096 is subject to Phosphoserine. A compositionally biased stretch (basic and acidic residues) spans 4110–4122; it reads SSVKSEDGRRRTE. Residues 4218 to 4337 form a Spectrin 36 repeat; the sequence is RSRPRPADIL…EDQHPSTLKK (120 aa). Over residues 4326-4345 the composition is skewed to basic and acidic residues; that stretch reads FSEDQHPSTLKKPSEPHDVD. A compositionally biased stretch (polar residues) spans 4409 to 4429; sequence RQSASSSKVPSPGNAASDSTL. 17 Spectrin repeats span residues 4507-4626, 4627-4714, 4715-4823, 4824-4929, 4930-5037, 5038-5150, 5151-5252, 5253-5377, 5378-5473, 5474-5576, 5577-5691, 5692-5786, 5787-5894, 5895-6004, 6005-6122, 6123-6230, and 6231-6342; these read SMTE…RSYQ, NEVK…RARY, LELS…QSML, QKWE…QTLL, KHLL…QEKL, HQLQ…KIQH, LEQL…SQVH, QLRA…KAPH, NAHA…MLLA, KSNE…YSEL, QGNG…QWRF, FTTS…LSLG, EVIS…RVAI, RKQE…VKKL, KETF…EETW, RLWQ…LRYF, and TNQR…PGLD. Residues 5435–5459 form a disordered region; it reads NSTLSDQLPQPEERSTPGLHSGQRH. Ser5772 is modified (phosphoserine). Residues 6336–6473 are disordered; it reads SHTPGLDDEK…TEAPVPTDAS (138 aa). A compositionally biased stretch (acidic residues) spans 6341–6354; sequence LDDEKEASENETDI. Phosphoserine is present on residues Ser6348, Ser6371, Ser6400, Ser6417, Ser6418, Ser6419, and Ser6448. Basic and acidic residues predominate over residues 6355 to 6372; it reads EDPREIQADSWRKRRESE. 3 Spectrin repeats span residues 6450–6534, 6535–6650, and 6651–6767; these read SHSK…KLRL, KQTV…QCQD, and FHQL…SFDE. The tract at residues 6790–6812 is disordered; that stretch reads EEEEEEEETDSRMPHLDSPGSSQ. Residues 6815–6874 form the KASH domain; it reads RSFLSRVIRAALPLQLLLLLLLLLACLLPASEDDYSCTQANNFARSFYPMLRYTNGPPPT. Residues 6824–6844 form a helical; Anchor for type IV membrane protein membrane-spanning segment; that stretch reads AALPLQLLLLLLLLLACLLPA. At 6845–6874 the chain is on the perinuclear space side; sequence SEDDYSCTQANNFARSFYPMLRYTNGPPPT. The interval 6861–6874 is sufficient for interaction with SUN2; the sequence is FYPMLRYTNGPPPT.

Belongs to the nesprin family. Core component of LINC complexes which are composed of inner nuclear membrane SUN domain-containing proteins coupled to outer nuclear membrane KASH domain-containing nesprins. SUN and KASH domain-containing proteins seem to bind each other promiscuously; however, some LINC complex constituents are tissue- or cell type-specific. At least SUN1/2-containing core LINC complexes are proposed to be hexameric composed of three protomers of each KASH and SUN domain-containing protein. The SUN2:SYNE2/KASH2 complex is a heterohexamer; the homotrimeric cloverleave-like conformation of the SUN domain is a prerequisite for LINC complex formation in which three separate SYNE2/KASH2 peptides bind at the interface of adjacent SUN domains. Interacts with EMD, LMNA, MKS3 and F-actin via its N-terminal domain. Interacts with DCTN1 and DYNC1I1/2; suggesting the association with the dynein-dynactin motor complex. Associates with kinesin motor complexes. Interacts with TMEM67. Interacts (via KASH domain) with TMEM258. Interacts with BROX; this interaction promotes SYN2 ubiquitination and facilitates the relaxation of mechanical stress imposed by compressive actin fibers at the rupture site. Post-translationally, the disulfid bond with SUN2 is required for stability of the SUN2:SYNE2/KASH2 LINC complex under tensile forces though not required for the interaction. In terms of tissue distribution, C-terminal isoforms are highly expressed in the brain, hert and skeletal muscle. Isoform 1 (Nesprin-2 Giant) is most prevalent in the brain, skin, kidney and skeletal muscle.

It is found in the nucleus outer membrane. It localises to the sarcoplasmic reticulum membrane. The protein localises to the cell membrane. Its subcellular location is the cytoplasm. The protein resides in the cytoskeleton. It is found in the mitochondrion. It localises to the nucleus. The protein localises to the nucleoplasm. In terms of biological role, multi-isomeric modular protein which forms a linking network between organelles and the actin cytoskeleton to maintain the subcellular spatial organization. As a component of the LINC (LInker of Nucleoskeleton and Cytoskeleton) complex involved in the connection between the nuclear lamina and the cytoskeleton. The nucleocytoplasmic interactions established by the LINC complex play an important role in the transmission of mechanical forces across the nuclear envelope and in nuclear movement and positioning. Specifically, SYNE2 and SUN2 assemble in arrays of transmembrane actin-associated nuclear (TAN) lines which are bound to F-actin cables and couple the nucleus to retrograde actin flow during actin-dependent nuclear movement. May be involved in nucleus-centrosome attachment. During interkinetic nuclear migration (INM) at G2 phase and nuclear migration in neural progenitors its LINC complex association with SUN1/2 and probable association with cytoplasmic dynein-dynactin motor complexes functions to pull the nucleus toward the centrosome; SYNE1 and SYNE2 seem to act redundantly in cerebellum, midbrain, brain stem, and other brain regions except cerebral cortex and hippocampus. During INM at G1 phase mediates respective LINC complex association with kinesin to push the nucleus away from the centrosome. Involved in nuclear migration in retinal photoreceptor progenitors. Required for centrosome migration to the apical cell surface during early ciliogenesis. This chain is Nesprin-2, found in Mus musculus (Mouse).